A 104-amino-acid chain; its full sequence is Circadian clock oscillator protein KaiB (104 aa).

Belongs to the KaiB family. The KaiABC complex composition changes during the circadian cycle to control KaiC phosphorylation. Complexes KaiC(6), KaiA(2-4):KaiC(6), KaiB(6):KaiC(6) and KaiC(6):KaiB(6):KaiA(12) are among the most important forms, many form cooperatively. Undergoes a major conformational rearrangment; in the free state forms homotetramers as a dimer of dimers. When bound to the CI domain of KaiC switches to a monomeric thioredoxin-fold (KaiB(fs)). KaiB(fs) binds CikA, leading it to dephosphorylate phospho-RpaA.

Its function is as follows. Key component of the KaiABC oscillator complex, which constitutes the main circadian regulator in cyanobacteria. Complex composition changes during the circadian cycle to control KaiC phosphorylation. KaiA stimulates KaiC autophosphorylation, while KaiB sequesters KaiA, leading to KaiC autodephosphorylation. Phospho-Ser-431 KaiC accumulation triggers binding of KaiB to form the KaiB(6):KaiC(6) complex, leading to changes in output regulators CikA and SasA. KaiB switches to a thioredoxin-like fold (KaiB(fs)) when bound to KaiC. KaiB(6):KaiC(6) formation exposes a site for KaiA binding that sequesters KaiA from KaiC, making the KaiC(6):KaiB(6):KaiA(12) complex that results in KaiC autodephosphorylation. Functionally, a metamorphic protein which reversibly switches between an inactive tetrameric fold and a rare, thioredoxin-like monomeric fold (KaiB(fs)). KaiB(fs) binds phospho-KaiC, KaiA and CikA. KaiA and CikA compete for binding to KaiB(fs), and KaiB(fs) and SasA compete for binding to KaiC, thus the clock oscillator and output signal pathway are tightly coupled. The protein is Circadian clock oscillator protein KaiB of Parasynechococcus marenigrum (strain WH8102).